A 280-amino-acid chain; its full sequence is Phosphatidylserine decarboxylase proenzyme (280 aa).

Catalysis depends on charge relay system; for autoendoproteolytic cleavage activity residues aspartate 86, histidine 143, and serine 246. Serine 246 serves as the catalytic Schiff-base intermediate with substrate; via pyruvic acid; for decarboxylase activity. Serine 246 bears the Pyruvic acid (Ser); by autocatalysis mark.

This sequence belongs to the phosphatidylserine decarboxylase family. PSD-B subfamily. Prokaryotic type I sub-subfamily. As to quaternary structure, heterodimer of a large membrane-associated beta subunit and a small pyruvoyl-containing alpha subunit. The cofactor is pyruvate. Is synthesized initially as an inactive proenzyme. Formation of the active enzyme involves a self-maturation process in which the active site pyruvoyl group is generated from an internal serine residue via an autocatalytic post-translational modification. Two non-identical subunits are generated from the proenzyme in this reaction, and the pyruvate is formed at the N-terminus of the alpha chain, which is derived from the carboxyl end of the proenzyme. The autoendoproteolytic cleavage occurs by a canonical serine protease mechanism, in which the side chain hydroxyl group of the serine supplies its oxygen atom to form the C-terminus of the beta chain, while the remainder of the serine residue undergoes an oxidative deamination to produce ammonia and the pyruvoyl prosthetic group on the alpha chain. During this reaction, the Ser that is part of the protease active site of the proenzyme becomes the pyruvoyl prosthetic group, which constitutes an essential element of the active site of the mature decarboxylase.

The protein localises to the cell membrane. The enzyme catalyses a 1,2-diacyl-sn-glycero-3-phospho-L-serine + H(+) = a 1,2-diacyl-sn-glycero-3-phosphoethanolamine + CO2. The protein operates within phospholipid metabolism; phosphatidylethanolamine biosynthesis; phosphatidylethanolamine from CDP-diacylglycerol: step 2/2. Its function is as follows. Catalyzes the formation of phosphatidylethanolamine (PtdEtn) from phosphatidylserine (PtdSer). This chain is Phosphatidylserine decarboxylase proenzyme, found in Brevibacillus brevis (strain 47 / JCM 6285 / NBRC 100599).